Consider the following 326-residue polypeptide: Adenine deaminase (326 aa).

His-14, His-16, and His-194 together coordinate Zn(2+). Catalysis depends on Glu-197, which acts as the Proton donor. A Zn(2+)-binding site is contributed by Asp-275. Asp-276 provides a ligand contact to substrate.

The protein belongs to the metallo-dependent hydrolases superfamily. Adenosine and AMP deaminases family. Adenine deaminase type 2 subfamily. Requires Zn(2+) as cofactor.

The catalysed reaction is adenine + H2O + H(+) = hypoxanthine + NH4(+). In terms of biological role, catalyzes the hydrolytic deamination of adenine to hypoxanthine. Plays an important role in the purine salvage pathway and in nitrogen catabolism. This is Adenine deaminase from Crocosphaera subtropica (strain ATCC 51142 / BH68) (Cyanothece sp. (strain ATCC 51142)).